The primary structure comprises 361 residues: Phosphoserine aminotransferase (361 aa).

Arginine 42 contacts L-glutamate. Residues 76 to 77 (AR), tryptophan 102, threonine 153, aspartate 173, and glutamine 196 contribute to the pyridoxal 5'-phosphate site. Lysine 197 carries the post-translational modification N6-(pyridoxal phosphate)lysine. A pyridoxal 5'-phosphate-binding site is contributed by 238 to 239 (NT).

This sequence belongs to the class-V pyridoxal-phosphate-dependent aminotransferase family. SerC subfamily. As to quaternary structure, homodimer. The cofactor is pyridoxal 5'-phosphate.

The protein resides in the cytoplasm. The catalysed reaction is O-phospho-L-serine + 2-oxoglutarate = 3-phosphooxypyruvate + L-glutamate. It catalyses the reaction 4-(phosphooxy)-L-threonine + 2-oxoglutarate = (R)-3-hydroxy-2-oxo-4-phosphooxybutanoate + L-glutamate. It functions in the pathway amino-acid biosynthesis; L-serine biosynthesis; L-serine from 3-phospho-D-glycerate: step 2/3. The protein operates within cofactor biosynthesis; pyridoxine 5'-phosphate biosynthesis; pyridoxine 5'-phosphate from D-erythrose 4-phosphate: step 3/5. In terms of biological role, catalyzes the reversible conversion of 3-phosphohydroxypyruvate to phosphoserine and of 3-hydroxy-2-oxo-4-phosphonooxybutanoate to phosphohydroxythreonine. This chain is Phosphoserine aminotransferase, found in Buchnera aphidicola subsp. Acyrthosiphon pisum (strain 5A).